The primary structure comprises 478 residues: MARCCFYTAGTLSLLLLVTSVTLLVARVFQKAVDQTIEKNMVLQNGTKVFDSWEKPPLPVYIQFYFFNVTNPEEILQGEIPLLEEVGPYTYRELRNKANVQFGENGTTISAVTNKAYIFERNQSVGDPTVDLIRTINIPLLTVVEMAQQPFLREIIEAMLKAYQQTLFVTHTVHELLWGYKDEVLSLVHIFRPDVSPNFGLFYERNGTNDGEYVFLTGEDNYLNFTKIVEWNGKTSLDWWTTDTCNMINGTDGDSFHPLISKDETLYIFPSDFCRSVYITFSSFENVEGLPAFRYKVPAEILANSSENAGFCIPEGNCMDAGVLNVSICKNGAPIIMSFPHFYQADEKFVSAIKGMRPNKEEHESFVDINPLTGIILRGAKRFQINTYVKKLDDFVETGNIRTMVFPVMYLNESVLIDKETASQLKSVINTTLIVTNIPYIIMALGVFFGLIFTWLACRGQGSTDEGTADERAPLIRT.

Over 2–4 the chain is Cytoplasmic; that stretch reads ARC. The helical transmembrane segment at 5–27 threads the bilayer; that stretch reads CFYTAGTLSLLLLVTSVTLLVAR. Residues 28-433 are Lumenal-facing; the sequence is VFQKAVDQTI…QLKSVINTTL (406 aa). Asn-45, Asn-68, Asn-105, and Asn-122 each carry an N-linked (GlcNAc...) asparagine glycan. The segment at 155 to 191 is important for interaction with GBA1; sequence IIEAMLKAYQQTLFVTHTVHELLWGYKDEVLSLVHIF. Asn-206, Asn-224, Asn-249, and Asn-304 each carry an N-linked (GlcNAc...) asparagine glycan. Cystine bridges form between Cys-274–Cys-329 and Cys-312–Cys-318. Asn-325, Asn-412, and Asn-430 each carry an N-linked (GlcNAc...) asparagine glycan. A helical membrane pass occupies residues 434-459; sequence IVTNIPYIIMALGVFFGLIFTWLACR. Over 460–478 the chain is Cytoplasmic; that stretch reads GQGSTDEGTADERAPLIRT.

It belongs to the CD36 family. In terms of assembly, interacts with GBA1. Acylated by palmitic acid group(s).

Its subcellular location is the lysosome membrane. Acts as a lysosomal receptor for glucosylceramidase (GBA1) targeting. This chain is Lysosome membrane protein 2 (Scarb2), found in Rattus norvegicus (Rat).